A 497-amino-acid chain; its full sequence is SIQHVYGAQHPPFDPLLHGTLLKSTAKMPTTPVKAKRVSTFQEFESNTSDAWDAGEDDDELLAMAAESLNSEVVMETANRVLRNHSQRQGRPTLQEGPGLQQKPRPEAEPPSPPSGDLRLVKSVSESHTSCPAESASDAAPLQRSQSLPHAAAVTLGGTSDPGTLSSSALSEREASRLDKFEQLLAGPNTDLEELRKLSWSGIPKPVRPMTWKLLSGYLPANVDRRPATLQRKQKEYFAFIEHYYDSRNDEVHQDTYRQIHIDIPRMSPEALILQPKVTEIFERILFIWAIRHPASGYVQGINDLVTPFFVVFICEYIEAEEVDTVDVSGVPAEVLRNIEADTYWCMSKLLDGIQDNYTFAQPGIQMKVKMLEELVSRIDEQVHRHLDQHEVRYLQFAFRWMNNLLMREVPLRCTIRLWDTYQSEPEGFSHFHLYVCAAFLVRWRKEILEEKDFQELLLFLQNLPTAHWDDEDISLLLAEAYRLKFAFADAPNHYKK.

The tract at residues 83–147 (RNHSQRQGRP…DAAPLQRSQS (65 aa)) is disordered. A phosphoserine mark is found at S112, S125, and S147. One can recognise a Rab-GAP TBC domain in the interval 202–426 (GIPKPVRPMT…RLWDTYQSEP (225 aa)).

In terms of assembly, homodimer. Interacts with ACBD3 and ARFGEF1. Interacts with YWHAB, YWHAE, YWHAG, YWHAH, YWHAQ and YWHAZ.

May act as a GTPase-activating protein for Rab family protein(s). This Macaca fascicularis (Crab-eating macaque) protein is TBC1 domain family member 22A (TBC1D22A).